Consider the following 151-residue polypeptide: Large ribosomal subunit protein bL9 (151 aa).

Belongs to the bacterial ribosomal protein bL9 family.

Functionally, binds to the 23S rRNA. The chain is Large ribosomal subunit protein bL9 from Bordetella pertussis (strain Tohama I / ATCC BAA-589 / NCTC 13251).